Reading from the N-terminus, the 101-residue chain is Large ribosomal subunit protein uL24 (101 aa).

Belongs to the universal ribosomal protein uL24 family. In terms of assembly, part of the 50S ribosomal subunit.

One of two assembly initiator proteins, it binds directly to the 5'-end of the 23S rRNA, where it nucleates assembly of the 50S subunit. In terms of biological role, one of the proteins that surrounds the polypeptide exit tunnel on the outside of the subunit. This is Large ribosomal subunit protein uL24 from Streptococcus pneumoniae (strain ATCC 700669 / Spain 23F-1).